The sequence spans 83 residues: CDC42 small effector protein 2 (83 aa).

2 S-palmitoyl cysteine lipidation sites follow: cysteine 10 and cysteine 11. Positions 28-41 constitute a CRIB domain; it reads IGEPTNFVHTAHVG. 2 positions are modified to phosphoserine: serine 42 and serine 51.

The protein belongs to the CDC42SE/SPEC family. In terms of assembly, interacts with CDC42 (in GTP-bound form). Interacts weakly with RAC1 and not at all with RHOA.

It localises to the cytoplasm. The protein localises to the cytoskeleton. Its subcellular location is the cell membrane. It is found in the cell projection. The protein resides in the phagocytic cup. Functionally, probably involved in the organization of the actin cytoskeleton by acting downstream of CDC42, inducing actin filament assembly. Alters CDC42-induced cell shape changes. In activated T-cells, may play a role in CDC42-mediated F-actin accumulation at the immunological synapse. May play a role in early contractile events in phagocytosis in macrophages. The chain is CDC42 small effector protein 2 (Cdc42se2) from Rattus norvegicus (Rat).